Consider the following 373-residue polypeptide: Chaperone protein DnaJ (373 aa).

The region spanning 5-70 is the J domain; it reads DYYEVLGLQK…EKKSNYDQFG (66 aa). The segment at 132–214 adopts a CR-type zinc-finger fold; the sequence is GVEKEITVNR…CRGNGNVRKT (83 aa). C145, C148, C162, C165, C188, C191, C202, and C205 together coordinate Zn(2+). CXXCXGXG motif repeat units follow at residues 145–152, 162–169, 188–195, and 202–209; these read CEHCNGSG, CPTCSGTG, CDRCSGTG, and CTHCRGNG.

It belongs to the DnaJ family. In terms of assembly, homodimer. Zn(2+) is required as a cofactor.

The protein resides in the cytoplasm. Its function is as follows. Participates actively in the response to hyperosmotic and heat shock by preventing the aggregation of stress-denatured proteins and by disaggregating proteins, also in an autonomous, DnaK-independent fashion. Unfolded proteins bind initially to DnaJ; upon interaction with the DnaJ-bound protein, DnaK hydrolyzes its bound ATP, resulting in the formation of a stable complex. GrpE releases ADP from DnaK; ATP binding to DnaK triggers the release of the substrate protein, thus completing the reaction cycle. Several rounds of ATP-dependent interactions between DnaJ, DnaK and GrpE are required for fully efficient folding. Also involved, together with DnaK and GrpE, in the DNA replication of plasmids through activation of initiation proteins. In Clostridium botulinum (strain Eklund 17B / Type B), this protein is Chaperone protein DnaJ.